The chain runs to 273 residues: Large ribosomal subunit protein uL2 (273 aa).

Positions 224–263 (AMNPVDHPHGGGEGRNFGKHPVTPWGLQTKGKKTRKNKRT) are disordered. Residues 253–263 (KGKKTRKNKRT) are compositionally biased toward basic residues.

It belongs to the universal ribosomal protein uL2 family. In terms of assembly, part of the 50S ribosomal subunit. Forms a bridge to the 30S subunit in the 70S ribosome.

Its function is as follows. One of the primary rRNA binding proteins. Required for association of the 30S and 50S subunits to form the 70S ribosome, for tRNA binding and peptide bond formation. It has been suggested to have peptidyltransferase activity; this is somewhat controversial. Makes several contacts with the 16S rRNA in the 70S ribosome. This Buchnera aphidicola subsp. Schizaphis graminum (strain Sg) protein is Large ribosomal subunit protein uL2.